The chain runs to 475 residues: Tetratricopeptide repeat protein 29 (475 aa).

TPR repeat units follow at residues 92 to 131, 136 to 173, 182 to 215, 234 to 267, 274 to 307, 314 to 347, and 354 to 387; these read DALR…EDAE, FEDV…AQLI, AEAH…TQGR, LRTY…AKEG, AEAS…STDL, GRGY…ARNN, and VRAS…TVEL. The tract at residues 437-475 is disordered; sequence IEPDPVTEEFRGSTVEAVSQNSERLEELSRFPGDQKNET. Residues 459-475 show a composition bias toward basic and acidic residues; that stretch reads ERLEELSRFPGDQKNET.

In terms of tissue distribution, expressed in spermatozoa (at protein level).

It localises to the cytoplasm. Its subcellular location is the cytoskeleton. The protein localises to the flagellum axoneme. In terms of biological role, axonemal protein which is implicated in axonemal and/or peri-axonemal structure assembly and regulates flagellum assembly and beating and therefore sperm motility. This chain is Tetratricopeptide repeat protein 29 (TTC29), found in Homo sapiens (Human).